The chain runs to 125 residues: Phosphoribosyl-AMP cyclohydrolase (125 aa).

D74 lines the Mg(2+) pocket. Residue C75 participates in Zn(2+) binding. The Mg(2+) site is built by D76 and D78. Residues C92 and C99 each coordinate Zn(2+).

It belongs to the PRA-CH family. Homodimer. Requires Mg(2+) as cofactor. Zn(2+) is required as a cofactor.

It is found in the cytoplasm. It catalyses the reaction 1-(5-phospho-beta-D-ribosyl)-5'-AMP + H2O = 1-(5-phospho-beta-D-ribosyl)-5-[(5-phospho-beta-D-ribosylamino)methylideneamino]imidazole-4-carboxamide. It functions in the pathway amino-acid biosynthesis; L-histidine biosynthesis; L-histidine from 5-phospho-alpha-D-ribose 1-diphosphate: step 3/9. In terms of biological role, catalyzes the hydrolysis of the adenine ring of phosphoribosyl-AMP. The chain is Phosphoribosyl-AMP cyclohydrolase from Desulforapulum autotrophicum (strain ATCC 43914 / DSM 3382 / VKM B-1955 / HRM2) (Desulfobacterium autotrophicum).